The following is a 70-amino-acid chain: Small ribosomal subunit protein bS21C (70 aa).

Belongs to the bacterial ribosomal protein bS21 family.

The protein is Small ribosomal subunit protein bS21C of Burkholderia pseudomallei (strain 1710b).